The following is a 426-amino-acid chain: Enolase (426 aa).

Q165 lines the (2R)-2-phosphoglycerate pocket. The Proton donor role is filled by E209. D244, E287, and D313 together coordinate Mg(2+). K338, R367, S368, and K389 together coordinate (2R)-2-phosphoglycerate. K338 acts as the Proton acceptor in catalysis.

It belongs to the enolase family. The cofactor is Mg(2+).

The protein resides in the cytoplasm. Its subcellular location is the secreted. It localises to the cell surface. It catalyses the reaction (2R)-2-phosphoglycerate = phosphoenolpyruvate + H2O. Its pathway is carbohydrate degradation; glycolysis; pyruvate from D-glyceraldehyde 3-phosphate: step 4/5. Functionally, catalyzes the reversible conversion of 2-phosphoglycerate (2-PG) into phosphoenolpyruvate (PEP). It is essential for the degradation of carbohydrates via glycolysis. In Methanococcus maripaludis (strain C7 / ATCC BAA-1331), this protein is Enolase.